Here is a 476-residue protein sequence, read N- to C-terminus: Glutamyl-tRNA(Gln) amidotransferase subunit A (476 aa).

Catalysis depends on charge relay system residues K69 and S144. Catalysis depends on S168, which acts as the Acyl-ester intermediate.

It belongs to the amidase family. GatA subfamily. Heterotrimer of A, B and C subunits.

It carries out the reaction L-glutamyl-tRNA(Gln) + L-glutamine + ATP + H2O = L-glutaminyl-tRNA(Gln) + L-glutamate + ADP + phosphate + H(+). Allows the formation of correctly charged Gln-tRNA(Gln) through the transamidation of misacylated Glu-tRNA(Gln) in organisms which lack glutaminyl-tRNA synthetase. The reaction takes place in the presence of glutamine and ATP through an activated gamma-phospho-Glu-tRNA(Gln). The protein is Glutamyl-tRNA(Gln) amidotransferase subunit A of Sulfolobus acidocaldarius (strain ATCC 33909 / DSM 639 / JCM 8929 / NBRC 15157 / NCIMB 11770).